The following is a 177-amino-acid chain: B9 domain-containing protein 2 (177 aa).

In terms of domain architecture, C2 B9-type spans 2–118 (AEVHIIGQIL…EIGTWKVAPN (117 aa)).

It belongs to the B9D family. Probable component of the tectonic-like complex (also named MKS complex), composed of B9d1, B9d2, Cc2d2a, Mks1 and tctn. Expressed in chordotonal neurons in the antennae (at protein level). Expressed in spermatids (at protein level).

It is found in the cytoplasm. Its subcellular location is the cytoskeleton. The protein localises to the cilium basal body. Its function is as follows. Probable component of the tectonic-like complex (also named MKS complex), a complex localized at the transition zone of primary cilia. Has a role in ciliary structure and function. The polypeptide is B9 domain-containing protein 2 (Drosophila melanogaster (Fruit fly)).